Reading from the N-terminus, the 247-residue chain is Putative methyltransferase YqeM (247 aa).

Belongs to the methyltransferase superfamily.

May be a S-adenosyl-L-methionine (SAM)-dependent methyltransferase. This is Putative methyltransferase YqeM (yqeM) from Bacillus subtilis (strain 168).